The following is a 302-amino-acid chain: tRNA-cytidine(32) 2-sulfurtransferase (302 aa).

A PP-loop motif motif is present at residues 44 to 49; that stretch reads SGGKDS. Residues Cys-119, Cys-122, and Cys-210 each coordinate [4Fe-4S] cluster.

Belongs to the TtcA family. In terms of assembly, homodimer. The cofactor is Mg(2+). It depends on [4Fe-4S] cluster as a cofactor.

Its subcellular location is the cytoplasm. It carries out the reaction cytidine(32) in tRNA + S-sulfanyl-L-cysteinyl-[cysteine desulfurase] + AH2 + ATP = 2-thiocytidine(32) in tRNA + L-cysteinyl-[cysteine desulfurase] + A + AMP + diphosphate + H(+). It functions in the pathway tRNA modification. Functionally, catalyzes the ATP-dependent 2-thiolation of cytidine in position 32 of tRNA, to form 2-thiocytidine (s(2)C32). The sulfur atoms are provided by the cysteine/cysteine desulfurase (IscS) system. The polypeptide is tRNA-cytidine(32) 2-sulfurtransferase (Tolumonas auensis (strain DSM 9187 / NBRC 110442 / TA 4)).